A 691-amino-acid polypeptide reads, in one-letter code: Cyclic nucleotide-gated channel alpha-1 (691 aa).

Residues 1 to 168 (MKKNIINTWY…PAGNMYYNWL (168 aa)) lie on the Cytoplasmic side of the membrane. The interval 31 to 151 (ENGARSSFSD…KGKDKKEEEK (121 aa)) is disordered. The segment covering 39 to 56 (SDDDGDDDSASMFEESEN) has biased composition (acidic residues). 2 stretches are compositionally biased toward basic and acidic residues: residues 57–76 (ETPH…DPSQ) and 112–151 (SKSG…EEEK). A helical membrane pass occupies residues 169-190 (FCITLPVMYNWTMVIARACFDE). Topologically, residues 191–200 (LQSDYLEYWI) are extracellular. Residues 201–221 (IFDYLSDIVYLLDMFVRTRTG) traverse the membrane as a helical segment. Over 222–246 (YLEQGLLVREEAKLIEKYKSNLQFK) the chain is Cytoplasmic. Residues 247–265 (LDFLSVIPTDLLYFKLGWN) traverse the membrane as a helical segment. The Extracellular segment spans residues 266–270 (YPEIR). The helical transmembrane segment at 271 to 289 (LNRLLRISRMFEFFQRTET) threads the bilayer. The Cytoplasmic portion of the chain corresponds to 290-296 (RTNYPNI). The tract at residues 294–402 (PNIFRISNLV…GNIGSMISNM (109 aa)) is ion conduction pathway. The helical transmembrane segment at 297-320 (FRISNLVMYIVIIIHWNACVYFSI) threads the bilayer. Over 321–343 (SKAIGFGNDTWVYPDVNDPEFGR) the chain is Extracellular. Residue asparagine 328 is glycosylated (N-linked (GlcNAc...) asparagine). The next 2 helical transmembrane spans lie at 344–378 (LARK…VFVV) and 379–403 (VDFL…SNMN). The tract at residues 361–364 (TIGE) is selectivity filter. The segment at 404–480 (AARAEFQARI…DTLKKVRIFA (77 aa)) is C-linker. Residues 404-691 (AARAEFQARI…ESRPLDSTQD (288 aa)) lie on the Cytoplasmic side of the membrane. The interval 484–604 (AGLLVELVLK…EEKGKQILMK (121 aa)) is cyclic nucleotide-binding domain. Residues glycine 544, serine 547, arginine 560, and threonine 561 each coordinate 3',5'-cyclic GMP. 3',5'-cyclic AMP contacts are provided by arginine 560 and threonine 561. Positions 622–676 (LEEKVTRMEGSVDLLQTRFARILAEYESMQQKLKQRLTKVERFLKPIIDTEFSAL) form a coiled coil.

It belongs to the cyclic nucleotide-gated cation channel (TC 1.A.1.5) family. CNGA1 subfamily. Forms heterotetrameric channels composed of CNGA1 and CNGB1 subunits with 3:1 stoichiometry. May also form cyclic nucleotide-activated homotetrameric channels, that are efficiently activated by saturating cGMP, but poorly activated by saturating cAMP compared to the heterotetramer with CNGB1. The channel binds Ca(2+)-bound CALM1 via CaM1 and CaM2 regions of the CNGB1 subunit; this interaction modulates the affinity of the channel for cNMPs in response to intracellular Ca(2+) levels.

It localises to the cell membrane. The catalysed reaction is Ca(2+)(in) = Ca(2+)(out). It catalyses the reaction Na(+)(in) = Na(+)(out). It carries out the reaction K(+)(in) = K(+)(out). The enzyme catalyses NH4(+)(in) = NH4(+)(out). The catalysed reaction is Rb(+)(in) = Rb(+)(out). It catalyses the reaction Li(+)(in) = Li(+)(out). It carries out the reaction Cs(+)(in) = Cs(+)(out). In terms of biological role, pore-forming subunit of the rod cyclic nucleotide-gated channel. Mediates rod photoresponses at dim light converting transient changes in intracellular cGMP levels into electrical signals. In the dark, cGMP levels are high and keep the channel open enabling a steady inward current carried by Na(+) and Ca(2+) ions that leads to membrane depolarization and neurotransmitter release from synaptic terminals. Upon photon absorption cGMP levels decline leading to channel closure and membrane hyperpolarization that ultimately slows neurotransmitter release and signals the presence of light, the end point of the phototransduction cascade. Conducts cGMP- and cAMP-gated ion currents, with permeability for monovalent and divalent cations. The selectivity for Ca(2+) over Na(+) increases with cGMP concentrations, whereas the selectivity among monovalent ions is independent of the cGMP levels. The sequence is that of Cyclic nucleotide-gated channel alpha-1 from Canis lupus familiaris (Dog).